A 450-amino-acid polypeptide reads, in one-letter code: Chromosomal replication initiator protein DnaA (450 aa).

The tract at residues 1 to 76 (MNLNDILKEL…KKILKQPVNI (76 aa)) is domain I, interacts with DnaA modulators. A domain II region spans residues 76–107 (ISFTYEQEYQKQLEKTESINKDHSDIISKKNK). A domain III, AAA+ region region spans residues 108–327 (KVNENTFENF…GSVSRLNFWS (220 aa)). ATP-binding residues include glycine 151, glycine 153, lysine 154, and threonine 155. The segment at 328 to 450 (QQNPEEKVIT…DILKNKILTK (123 aa)) is domain IV, binds dsDNA.

The protein belongs to the DnaA family. In terms of assembly, oligomerizes as a right-handed, spiral filament on DNA at oriC.

The protein localises to the cytoplasm. It is found in the cell membrane. Its function is as follows. Plays an essential role in the initiation and regulation of chromosomal replication. ATP-DnaA binds to the origin of replication (oriC) to initiate formation of the DNA replication initiation complex once per cell cycle. Binds the DnaA box (a 9 base pair repeat at the origin) and separates the double-stranded (ds)DNA. Forms a right-handed helical filament on oriC DNA; dsDNA binds to the exterior of the filament while single-stranded (ss)DNA is stabiized in the filament's interior. The ATP-DnaA-oriC complex binds and stabilizes one strand of the AT-rich DNA unwinding element (DUE), permitting loading of DNA polymerase. After initiation quickly degrades to an ADP-DnaA complex that is not apt for DNA replication. Binds acidic phospholipids. This is Chromosomal replication initiator protein DnaA from Mycoplasma capricolum subsp. capricolum (strain California kid / ATCC 27343 / NCTC 10154).